Here is a 1580-residue protein sequence, read N- to C-terminus: Transcriptional activator GLI3 (1580 aa).

Methionine 1 is subject to N-acetylmethionine. 2 stretches are compositionally biased toward polar residues: residues methionine 1–threonine 10 and isoleucine 58–serine 78. A disordered region spans residues methionine 1–serine 79. Arginine 175 is subject to Omega-N-methylarginine. Residues glutamine 368 to glutamate 475 form a disordered region. Over residues asparagine 401–glycine 427 the composition is skewed to polar residues. Glycyl lysine isopeptide (Lys-Gly) (interchain with G-Cter in SUMO2) cross-links involve residues lysine 438 and lysine 462. Positions valine 461–proline 474 are enriched in basic and acidic residues. C2H2-type zinc fingers lie at residues threonine 480 to histidine 505, phenylalanine 513 to histidine 540, histidine 546 to histidine 570, tyrosine 576 to histidine 601, and tyrosine 607 to histidine 632. The segment at aspartate 620–leucine 728 is disordered. Basic and acidic residues predominate over residues histidine 632 to proline 648. Phosphoserine is present on serine 664. The segment covering serine 684 to lysine 699 has biased composition (basic and acidic residues). Over residues serine 703–serine 726 the composition is skewed to low complexity. A mediates interaction with DZIP1 region spans residues aspartate 745–asparagine 845. Residue lysine 773 forms a Glycyl lysine isopeptide (Lys-Gly) (interchain with G-Cter in ubiquitin) linkage. A Glycyl lysine isopeptide (Lys-Gly) (interchain with G-Cter in SUMO2); alternate cross-link involves residue lysine 779. Residue lysine 779 forms a Glycyl lysine isopeptide (Lys-Gly) (interchain with G-Cter in ubiquitin); alternate linkage. Glycyl lysine isopeptide (Lys-Gly) (interchain with G-Cter in ubiquitin) cross-links involve residues lysine 784 and lysine 800. Phosphoserine; by PKA occurs at positions 849, 865, 877, and 907. The segment covering arginine 863–alanine 882 has biased composition (low complexity). Residues arginine 863–leucine 918 are disordered. The segment covering glutamate 908–leucine 918 has biased composition (polar residues). 2 positions are modified to phosphoserine; by PKA: serine 980 and serine 1006. Positions aspartate 981–arginine 1042 are disordered.

The protein belongs to the GLI C2H2-type zinc-finger protein family. As to quaternary structure, the full-length GLI3 form (GLI3FL) interacts with SUFU and this interaction regulates the formation of either repressor or activator forms of GLI3. Its association with SUFU is regulated by Hh signaling and dissociation of the SUFU-GLI3 interaction requires the presence of the ciliary motor KIF3A. Interacts with KIF7. The activator form of GLI3 (GLI3A) but not the repressor form (GLI3R) can interact with TRPS1. The phosphorylated form interacts with BTRC. Interacts with ZIC1. Interacts with ZIC3 (via C2H2-type domains 3, 4 and 5); the interaction enhances its transcriptional activity. Interacts with WRD11; the interaction associates EMX1 with GLI3. Interacts with DZIP1; retains GLI3 within the cytoplasm. Phosphorylated on multiple sites by protein kinase A (PKA) and phosphorylation by PKA primes further phosphorylation by CK1 and GSK3. Phosphorylated by DYRK2 (in vitro). Phosphorylation is essential for its proteolytic processing. Post-translationally, transcriptional repressor GLI3R, a C-terminally truncated form, is generated from the full-length GLI3 protein (GLI3FL/GLI3-190) through proteolytic processing. This process requires PKA-primed phosphorylation of GLI3, ubiquitination of GLI3 and the presence of BTRC. GLI3FL is complexed with SUFU in the cytoplasm and is maintained in a neutral state. Without the Hh signal, the SUFU-GLI3 complex is recruited to cilia, leading to the efficient processing of GLI3FL into GLI3R. GLI3R formation leads to its dissociation from SUFU, allowing it to translocate into the nucleus, and repress Hh target genes. When Hh signaling is initiated, SUFU dissociates from GLI3FL and this has two consequences. First, GLI3R production is halted. Second, free GLI3FL translocates to the nucleus, where it is phosphorylated, destabilized, and converted to a transcriptional activator (GLI3A). Phosphorylated in vitro by ULK3.

The protein localises to the nucleus. It localises to the cytoplasm. Its subcellular location is the cell projection. The protein resides in the cilium. Functionally, has a dual function as a transcriptional activator and a repressor of the sonic hedgehog (Shh) pathway, and plays a role in limb development. The full-length GLI3 form (GLI3FL) after phosphorylation and nuclear translocation, acts as an activator (GLI3A) while GLI3R, its C-terminally truncated form, acts as a repressor. A proper balance between the GLI3 activator and the repressor GLI3R, rather than the repressor gradient itself or the activator/repressor ratio gradient, specifies limb digit number and identity. In concert with TRPS1, plays a role in regulating the size of the zone of distal chondrocytes, in restricting the zone of PTHLH expression in distal cells and in activating chondrocyte proliferation. Binds to the minimal GLI-consensus sequence 5'-GGGTGGTC-3'. Plays a role in limb and brain development. This Pan troglodytes (Chimpanzee) protein is Transcriptional activator GLI3 (GLI3).